Reading from the N-terminus, the 589-residue chain is Delta-like protein 3 (589 aa).

An N-terminal signal peptide occupies residues 1-32; sequence MVSLQVSSLPQTLILAFLLPQALPAGVFELQI. Topologically, residues 33–494 are extracellular; sequence HSFGPGPGPG…LRQADSQRFL (462 aa). Positions 174–213 constitute a DSL domain; the sequence is ARCEPPAVGAACARLCRSRSAPSRCGPGLRPCTPFPDECE. 6 consecutive EGF-like domains span residues 218–251, 276–312, 314–353, 355–391, 393–429, and 431–467; these read SLTV…PLCT, GPGP…PRCE, SGVT…SNCE, RVDR…PRCE, DLDD…RDCR, and RADP…VRCE. Disulfide bonds link C222–C233, C226–C239, C241–C250, C280–C291, C285–C300, C302–C311, C318–C329, C323–C341, C343–C352, C359–C370, C364–C379, C381–C390, C397–C408, C402–C417, C419–C428, C435–C446, C440–C455, and C457–C466. Residues 495–515 traverse the membrane as a helical segment; the sequence is LPPALGLLAAAALAGAALLLI. The Cytoplasmic portion of the chain corresponds to 516-589; sequence HVRRRGPGRD…PAPSIYAREA (74 aa). The interval 552–574 is disordered; it reads QDGAGDGPTSSADWNHPEDGDSR.

Can bind and activate Notch-1 or another Notch receptor. Ubiquitinated by MIB (MIB1 or MIB2), leading to its endocytosis and subsequent degradation.

Its subcellular location is the membrane. In terms of biological role, inhibits primary neurogenesis. May be required to divert neurons along a specific differentiation pathway. Plays a role in the formation of somite boundaries during segmentation of the paraxial mesoderm. This is Delta-like protein 3 (Dll3) from Rattus norvegicus (Rat).